A 447-amino-acid polypeptide reads, in one-letter code: Phosphoglucosamine mutase (447 aa).

The active-site Phosphoserine intermediate is S100. Residues S100, D239, D241, and D243 each contribute to the Mg(2+) site. S100 is subject to Phosphoserine.

This sequence belongs to the phosphohexose mutase family. Requires Mg(2+) as cofactor. In terms of processing, activated by phosphorylation.

It catalyses the reaction alpha-D-glucosamine 1-phosphate = D-glucosamine 6-phosphate. Catalyzes the conversion of glucosamine-6-phosphate to glucosamine-1-phosphate. This is Phosphoglucosamine mutase from Thermoanaerobacter sp. (strain X514).